Consider the following 615-residue polypeptide: DNA mismatch repair protein MutL (615 aa).

Residues 362–397 (HFAEPAVREPVAPRYSPAPASGGRPAASWPNAQPGY) are disordered. Positions 378–391 (PAPASGGRPAASWP) are enriched in low complexity.

Belongs to the DNA mismatch repair MutL/HexB family.

Functionally, this protein is involved in the repair of mismatches in DNA. It is required for dam-dependent methyl-directed DNA mismatch repair. May act as a 'molecular matchmaker', a protein that promotes the formation of a stable complex between two or more DNA-binding proteins in an ATP-dependent manner without itself being part of a final effector complex. In Escherichia fergusonii (strain ATCC 35469 / DSM 13698 / CCUG 18766 / IAM 14443 / JCM 21226 / LMG 7866 / NBRC 102419 / NCTC 12128 / CDC 0568-73), this protein is DNA mismatch repair protein MutL.